Here is a 230-residue protein sequence, read N- to C-terminus: Ribonuclease 3 (230 aa).

The region spanning 1–134 (MKQLEELLST…FLGALLLDKG (134 aa)) is the RNase III domain. Glutamate 47 lines the Mg(2+) pocket. Aspartate 51 is an active-site residue. 2 residues coordinate Mg(2+): aspartate 120 and glutamate 123. Glutamate 123 is an active-site residue. The 70-residue stretch at 160–229 (DYKTCLQEFL…AKNALAQLSE (70 aa)) folds into the DRBM domain.

The protein belongs to the ribonuclease III family. In terms of assembly, homodimer. Mg(2+) serves as cofactor.

Its subcellular location is the cytoplasm. The enzyme catalyses Endonucleolytic cleavage to 5'-phosphomonoester.. In terms of biological role, digests double-stranded RNA. Involved in the processing of primary rRNA transcript to yield the immediate precursors to the large and small rRNAs (23S and 16S). Processes some mRNAs, and tRNAs when they are encoded in the rRNA operon. Processes pre-crRNA and tracrRNA of type II CRISPR loci if present in the organism. This chain is Ribonuclease 3, found in Streptococcus pyogenes serotype M3 (strain SSI-1).